The following is a 93-amino-acid chain: uncharacterized protein (93 aa).

A helical transmembrane segment spans residues 68 to 88; it reads WLVTVVLANGVVSLFLLGGLI.

The protein resides in the membrane. This is an uncharacterized protein from Mycoplasma pneumoniae (strain ATCC 29342 / M129 / Subtype 1) (Mycoplasmoides pneumoniae).